Consider the following 1030-residue polypeptide: Putative pentatricopeptide repeat-containing protein At5g06400, mitochondrial (1030 aa).

Residues 1–77 (MKALFRFKSC…VKLDETTRLR (77 aa)) constitute a mitochondrion transit peptide. PPR repeat units follow at residues 188–222 (RVGI…GCDK), 223–257 (DIRT…GFEL), 258–292 (DATA…GITF), 293–323 (GLRT…MVRI), 328–362 (EHDA…EMCL), 363–393 (DAKY…MKRR), 397–431 (DSNV…GRPP), 432–466 (RVST…GIEP), 467–501 (DSVA…GIKP), 502–536 (TWKS…KIVI), 677–711 (NSEA…GCLI), 712–746 (TQDT…GLIP), 747–783 (SSST…GFVP), 784–814 (DREL…LGKI), 818–852 (VTVA…RSLL), 853–887 (DQYT…GTKP), 888–922 (GVHV…SCEP), 923–957 (SVVT…GTSP), and 958–992 (DFKT…GIAP).

The protein belongs to the PPR family. P subfamily.

It is found in the mitochondrion. This is Putative pentatricopeptide repeat-containing protein At5g06400, mitochondrial from Arabidopsis thaliana (Mouse-ear cress).